Reading from the N-terminus, the 427-residue chain is MLDFMDYIQLAFAEGTQRNCDNSYSSLTATTQNLLDFTTPERVRIHLSSLSTPNFATSYTLGTVGLIEGSISYLYSNISFDNTPSKSALIPLRKLAPGYRQVQAPIAPPSSKGQKATLLHATLHLPPPTTLNALFLRRISPTMQLSLAVSSTRGPPLSKSAPQATLLTQLTHDTGKYSNEYLFSTDNSLFGWRGLWNFGPDPRFNNNAQRLSLLSAGAEAYYSPVSSLIGMSTGLRFCTLPAATSSTPNPNTPISTFPYTLTLTLTPLTGSLSTSYSVRASPNLSFSSRFGFNVYSWESEMVAGFELWRQSRKAAIVDNDGLEWARNKARIWDIPASSQVPEPITPSEEETQESVLKVRVDQSWNVRLLWEGRVKELLVSAGVGLGPSSFSPSSYANSQATAGAQGSSGGPPTSYWRGVGVSVSYSS.

Over residues 393-414 (SSYANSQATAGAQGSSGGPPTS) the composition is skewed to low complexity. The interval 393 to 427 (SSYANSQATAGAQGSSGGPPTSYWRGVGVSVSYSS) is disordered.

The protein belongs to the MDM10 family. In terms of assembly, component of the ER-mitochondria encounter structure (ERMES) or MDM complex, composed of mmm1, mdm10, mdm12 and mdm34. Associates with the mitochondrial outer membrane sorting assembly machinery SAM(core) complex.

It is found in the mitochondrion outer membrane. Its function is as follows. Component of the ERMES/MDM complex, which serves as a molecular tether to connect the endoplasmic reticulum and mitochondria. Components of this complex are involved in the control of mitochondrial shape and protein biogenesis and may function in phospholipid exchange. mdm10 is involved in the late assembly steps of the general translocase of the mitochondrial outer membrane (TOM complex). Functions in the tom40-specific route of the assembly of outer membrane beta-barrel proteins, including the association of tom40 with the receptor tom22 and small TOM proteins. Can associate with the SAM(core) complex as well as the mdm12-mmm1 complex, both involved in late steps of the major beta-barrel assembly pathway, that is responsible for biogenesis of all outer membrane beta-barrel proteins. May act as a switch that shuttles between both complexes and channels precursor proteins into the tom40-specific pathway. Plays a role in mitochondrial morphology and in the inheritance of mitochondria. The protein is Mitochondrial distribution and morphology protein 10 (mdmB) of Emericella nidulans (strain FGSC A4 / ATCC 38163 / CBS 112.46 / NRRL 194 / M139) (Aspergillus nidulans).